The primary structure comprises 398 residues: Odorant receptor 59b (398 aa).

Residues 1–46 (MAVFKLIKPAPLTEKVQSRQGNIYLYRAMWLIGWIPPKEGVLRYVY) are Cytoplasmic-facing. A helical transmembrane segment spans residues 47–67 (LFWTCVPFAFGVFYLPVGFII). The Extracellular segment spans residues 68-84 (SYVQEFKNFTPGEFLTS). A helical transmembrane segment spans residues 85 to 105 (LQVCINVYGASVKSTITYLFL). Over 106 to 141 (WRLRKTEILLDSLDKRLANDSDRERIHNMVARCNYA) the chain is Cytoplasmic. Residues 142–162 (FLIYSFIYCGYAGSTFLSYAL) traverse the membrane as a helical segment. Topologically, residues 163–179 (SGRPPWSVYNPFIDWRD) are extracellular. Residues 180–200 (GMGSLWIQAIFEYITMSFAVL) form a helical membrane-spanning segment. Topologically, residues 201-269 (QDQLSDTYPL…DMIRPMISRT (69 aa)) are cytoplasmic. The chain crosses the membrane as a helical span at residues 270 to 290 (IFVQFALIGSVLGLTLVNVFF). At 291-293 (FSN) the chain is on the extracellular side. Residues 294-314 (FWKGVASLLFVITILLQTFPF) form a helical membrane-spanning segment. Residues 315–348 (CYTCNMLIDDAQDLSNEIFQSNWVDAEPRYKATL) are Cytoplasmic-facing. Residues 349–369 (VLFMHHVQQPIIFIAGGIFPI) form a helical membrane-spanning segment. At 370 to 398 (SMNSNITVAKFAFSIITIVRQMNLAEQFQ) the chain is on the extracellular side. N374 is a glycosylation site (N-linked (GlcNAc...) asparagine).

This sequence belongs to the insect chemoreceptor superfamily. Heteromeric odorant receptor channel (TC 1.A.69) family. Or2a subfamily. In terms of assembly, interacts with Orco. Complexes exist early in the endomembrane system in olfactory sensory neurons (OSNs), coupling these complexes to the conserved ciliary trafficking pathway. In terms of tissue distribution, expressed in olfactory sensory neurons in the antenna.

It is found in the cell membrane. In terms of biological role, odorant receptor which mediates acceptance or avoidance behavior, depending on its substrates. The odorant receptor repertoire encodes a large collection of odor stimuli that vary widely in identity, intensity, and duration. Forms a complex with Orco to form odorant-sensing units, providing sensitive and prolonged odorant signaling and calcium permeability. Also plays a role in the response to N,N-Diethyl-meta-toluamide (DEET), the most widely used insect repellent worldwide. In Drosophila melanogaster (Fruit fly), this protein is Odorant receptor 59b (Or59b).